The chain runs to 393 residues: Dual specificity mitogen-activated protein kinase kinase 1 (393 aa).

The interval 1-27 is disordered; it reads MPKKKPTPIQLNPAPDGSAVNGTSSAE. In terms of domain architecture, Protein kinase spans 68 to 361; it reads FEKISELGAG…LKQLMVHAFI (294 aa). ATP contacts are provided by residues 74 to 82 and lysine 97; that span reads LGAGNGGVV. The active-site Proton acceptor is the aspartate 190. Serine 218 and serine 222 each carry phosphoserine; by RAF. The segment at 270 to 307 is RAF1-binding; the sequence is ELELMFGCQVEGDAAETPPRPRTPGRPLSSYGMDSRPP. Threonine 286 is subject to Phosphothreonine. Threonine 292 is subject to Phosphothreonine; by MAPK1. Position 298 is a phosphoserine; by PAK (serine 298).

The protein belongs to the protein kinase superfamily. STE Ser/Thr protein kinase family. MAP kinase kinase subfamily. As to quaternary structure, found in a complex with at least BRAF, HRAS, MAP2K1, MAPK3/ERK1 and RGS14. Forms a heterodimer with MAP2K2/MEK2. Forms heterodimers with KSR2 which further dimerize to form tetramers. Interacts with KSR1 or KSR2 and BRAF; the interaction with KSR1 or KSR2 mediates KSR1-BRAF or KSR2-BRAF dimerization. Interacts with ARBB2, LAMTOR3, MAPK1/ERK2 and RAF1. Interacts with MAPK1/ERK2. Interacts with MORG1. Interacts with PPARG. Interacts with isoform 1 of VRK2. Interacts with SGK1. Interacts with BIRC6/bruce. Interacts with KAT7; the interaction promotes KAT7 phosphorylation. Interacts with RAF1 and NEK10; the interaction is required for ERK1/2-signaling pathway activation in response to UV irradiation. Interacts with TRAF3IP3. Interacts with MOS. Post-translationally, phosphorylation at Ser-218 and Ser-222 by MAP kinase kinase kinases (BRAF or MEKK1) positively regulates the kinase activity. Also phosphorylated at Thr-292 by MAPK1/ERK2 and at Ser-298 by PAK. MAPK1/ERK2 phosphorylation of Thr-292 occurs in response to cellular adhesion and leads to inhibition of Ser-298 phosphorylation by PAK. Autophosphorylated at Ser-218 and Ser-222, autophosphosphorylation is promoted by NEK10 following UV irradiation.

Its subcellular location is the cytoplasm. The protein resides in the cytoskeleton. It is found in the microtubule organizing center. It localises to the centrosome. The protein localises to the spindle pole body. Its subcellular location is the nucleus. The protein resides in the membrane. The catalysed reaction is L-seryl-[protein] + ATP = O-phospho-L-seryl-[protein] + ADP + H(+). It catalyses the reaction L-threonyl-[protein] + ATP = O-phospho-L-threonyl-[protein] + ADP + H(+). It carries out the reaction L-tyrosyl-[protein] + ATP = O-phospho-L-tyrosyl-[protein] + ADP + H(+). Its activity is regulated as follows. Ras proteins such as HRAS mediate the activation of RAF proteins such as RAF1 or BRAF which in turn activate extracellular signal-regulated kinases (ERK) through MAPK (mitogen-activated protein kinases) and ERK kinases MAP2K1/MEK1 and MAP2K2/MEK2. Activation occurs through phosphorylation of Ser-218 and Ser-222. MAP2K1/MEK1 binds KSR1 or KSR2 releasing the inhibitory intramolecular interaction between KSR1 or KSR2 protein kinase and N-terminal domains. This allows KSR1 or KSR2 dimerization with BRAF leading to BRAF activation and phosphorylation of MAP2K1. MAP2K1/MEK1 is also the target of negative feed-back regulation by its substrate kinases, such as MAPK1/ERK2. These phosphorylate MAP2K1/MEK1 on Thr-292, thereby facilitating dephosphorylation of the activating residues Ser-218 and Ser-222. Inhibited by serine/threonine phosphatase 2A. Its function is as follows. Dual specificity protein kinase which acts as an essential component of the MAP kinase signal transduction pathway. Binding of extracellular ligands such as growth factors, cytokines and hormones to their cell-surface receptors activates RAS and this initiates RAF1 activation. RAF1 then further activates the dual-specificity protein kinases MAP2K1/MEK1 and MAP2K2/MEK2. Both MAP2K1/MEK1 and MAP2K2/MEK2 function specifically in the MAPK/ERK cascade, and catalyze the concomitant phosphorylation of a threonine and a tyrosine residue in a Thr-Glu-Tyr sequence located in the extracellular signal-regulated kinases MAPK3/ERK1 and MAPK1/ERK2, leading to their activation and further transduction of the signal within the MAPK/ERK cascade. Activates BRAF in a KSR1 or KSR2-dependent manner; by binding to KSR1 or KSR2 releases the inhibitory intramolecular interaction between KSR1 or KSR2 protein kinase and N-terminal domains which promotes KSR1 or KSR2-BRAF dimerization and BRAF activation. Depending on the cellular context, this pathway mediates diverse biological functions such as cell growth, adhesion, survival and differentiation, predominantly through the regulation of transcription, metabolism and cytoskeletal rearrangements. One target of the MAPK/ERK cascade is peroxisome proliferator-activated receptor gamma (PPARG), a nuclear receptor that promotes differentiation and apoptosis. MAP2K1/MEK1 has been shown to export PPARG from the nucleus. The MAPK/ERK cascade is also involved in the regulation of endosomal dynamics, including lysosome processing and endosome cycling through the perinuclear recycling compartment (PNRC), as well as in the fragmentation of the Golgi apparatus during mitosis. This chain is Dual specificity mitogen-activated protein kinase kinase 1 (MAP2K1), found in Pan troglodytes (Chimpanzee).